A 292-amino-acid chain; its full sequence is RWD domain-containing protein 2A (292 aa).

Positions 14–134 (LEMEMLFSMF…QWLQDNSASY (121 aa)) constitute an RWD domain.

The chain is RWD domain-containing protein 2A (RWDD2A) from Macaca fascicularis (Crab-eating macaque).